The following is a 1425-amino-acid chain: Zinc finger FYVE domain-containing protein 9 (1425 aa).

2 disordered regions span residues 201–255 and 291–352; these read ESTE…IGRD and EDLT…SGRN. A compositionally biased stretch (basic and acidic residues) spans 202 to 225; the sequence is STEKDMNSEKQMDPLNRPKTEGRS. Polar residues-rich tracts occupy residues 230–245 and 296–312; these read CPTS…SPSQ and KISS…SFSH. Phosphoserine is present on residues Ser306 and Ser668. The FYVE-type zinc finger occupies 699–758; it reads DSQAPNCMKCEARFTFTKRRHHCRACGKVFCASCCSLKCKLLYMDRKEARVCVICHSVLM. Positions 705, 708, 721, 724, 729, 732, 750, and 753 each coordinate Zn(2+). The segment at 767-823 is SBD; the sequence is MSASSQSPNPNNPAEYCSTIPPLQQAQASGALSSPPPTVMVPVGVLKHPGAEVAQPR.

Interacts (via the SBD region) with SMAD2; the interaction recruits SMAD2 to the TGF-beta receptor and is disrupted by phosphorylation of SMAD2 upon TGF-beta receptor activation. Interacts with SMAD3. Interacts with TGFBR1 and TGFBR2; the interaction recruits SMAD2 to the TGF-beta receptor. Interacts with PML. As to expression, ubiquitous. In the brain found primarily in the cerebrovascular smooth muscle cells and reactive astrocytes.

Its subcellular location is the cytoplasm. The protein resides in the early endosome membrane. Functionally, early endosomal protein that functions to recruit SMAD2/SMAD3 to intracellular membranes and to the TGF-beta receptor. Plays a significant role in TGF-mediated signaling by regulating the subcellular location of SMAD2 and SMAD3 and modulating the transcriptional activity of the SMAD3/SMAD4 complex. Possibly associated with TGF-beta receptor internalization. This Homo sapiens (Human) protein is Zinc finger FYVE domain-containing protein 9 (ZFYVE9).